Consider the following 504-residue polypeptide: MAAALADMADLEELSRLSPLSPGSPGPAARGRAEPPEEEEEEDDEEAEAEAVAALLLNGGAGGGAGGGEAETMSEPSPESASQAGGDEDEDEEDDEDEGSSSGGAEEESSAESLVGSSSGGCSGDETRSLSPGAASSSSGDGDGKEGLEEPKGPRGGPGGPGSSGGGSSSSSVVSSGGDEGYGTGGGGSSATSGGRRGSLEMSSDGEPLSRMDSEDSISSTLMDIDSTISSGRSTPAMMNGQGSTTASSKHIAYNCCWDQCQACFNSSPDLADHIRSIHVDGQRGGVFVCLWKGCKVYNTPSTSQSWLQRHMLTHSGDKPFKCVVGGCNASFASQGGLARHVPTHFSQQNSSKVSSQPKAKEESPSKAGMNKRRKLKNKRRRSLPRPHDFFDAQTLDAIRHRAICFNLSAHIESLGKGHSVVFHSTVIAKRKEESGKIKLLLHWMPEDILPDVWVNESERHQLKTKVVHLSKLPKDTALLLDPNIYRTMPQKRLKRFDILNFPR.

The disordered stretch occupies residues 1–219 (MAAALADMAD…SRMDSEDSIS (219 aa)). The residue at position 2 (alanine 2) is an N-acetylalanine. Low complexity predominate over residues 16–30 (RLSPLSPGSPGPAAR). Phosphoserine is present on residues serine 18, serine 21, and serine 24. The span at 36–49 (PEEEEEEDDEEAEA) shows a compositional bias: acidic residues. The span at 59-69 (GGAGGGAGGGE) shows a compositional bias: gly residues. The span at 86 to 110 (GDEDEDEEDDEDEGSSSGGAEEESS) shows a compositional bias: acidic residues. Low complexity predominate over residues 129–140 (SLSPGAASSSSG). At serine 131 the chain carries Phosphoserine. The span at 142-153 (GDGKEGLEEPKG) shows a compositional bias: basic and acidic residues. 2 stretches are compositionally biased toward gly residues: residues 154 to 168 (PRGGPGGPGSSGGGS) and 178 to 189 (GDEGYGTGGGGS). Serine 199, serine 203, and serine 204 each carry phosphoserine. An interaction with RBBP4 region spans residues 202-287 (MSSDGEPLSR…IHVDGQRGGV (86 aa)). The C2H2-type 1 zinc-finger motif lies at 254–279 (YNCCWDQCQACFNSSPDLADHIRSIH). A C2H2-type 2; degenerate zinc finger spans residues 293 to 315 (KGCKVYNTPSTSQSWLQRHMLTH). The C2H2-type 3 zinc finger occupies 321–345 (FKCVVGGCNASFASQGGLARHVPTH). Residues 345–358 (HFSQQNSSKVSSQP) show a composition bias toward polar residues. A disordered region spans residues 345–387 (HFSQQNSSKVSSQPKAKEESPSKAGMNKRRKLKNKRRRSLPRP). The segment covering 370–385 (MNKRRKLKNKRRRSLP) has biased composition (basic residues). Serine 383 carries the phosphoserine modification. Residues 400-471 (RHRAICFNLS…QLKTKVVHLS (72 aa)) form an interaction with SUZ12 region. An important for nucleosome binding activity of the PRC2 complex region spans residues 488-504 (TMPQKRLKRFDILNFPR).

The protein belongs to the AEBP2/jing C2H2-type zinc-finger family. In terms of assembly, self-associates. Associates with the PRC2 complex, which consists of the core components EED, EZH1 or EZH2, SUZ12, and RBBP4, and various combinations of accessory subunits including AEBP2, JARID2, PHF19, MTF2 and EPOP. Found in a monomeric PRC2.2 (class 2) complex consisting of at least SUZ12, RBBP4, AEBP2 and JARID2. Within the PRC2 complex, interacts directly with SUZ12; competes with PHF19 for SUZ12 binding. Interacts with EED, EZH2, and RBBP4. May also interact with RBBP7. As to expression, expressed in brain, brown adipose tissue, white adipose tissue, heart, kidney, lung, skeletal muscle, small intestine and spleen. Expressed at low levels in liver.

It localises to the nucleus. Its function is as follows. Acts as an accessory subunit for the core Polycomb repressive complex 2 (PRC2), which mediates histone H3K27 (H3K27me3) trimethylation on chromatin leading to transcriptional repression of the affected target gene. Plays a role in nucleosome localization of the PRC2 complex. In Mus musculus (Mouse), this protein is Zinc finger protein AEBP2 (Aebp2).